The sequence spans 337 residues: tRNA N6-adenosine threonylcarbamoyltransferase (337 aa).

Fe cation contacts are provided by His-111 and His-115. Substrate-binding positions include 134 to 138 (LVSGG), Asp-167, Gly-180, and Asn-272. Asp-300 provides a ligand contact to Fe cation.

Belongs to the KAE1 / TsaD family. The cofactor is Fe(2+).

The protein localises to the cytoplasm. It carries out the reaction L-threonylcarbamoyladenylate + adenosine(37) in tRNA = N(6)-L-threonylcarbamoyladenosine(37) in tRNA + AMP + H(+). Required for the formation of a threonylcarbamoyl group on adenosine at position 37 (t(6)A37) in tRNAs that read codons beginning with adenine. Is involved in the transfer of the threonylcarbamoyl moiety of threonylcarbamoyl-AMP (TC-AMP) to the N6 group of A37, together with TsaE and TsaB. TsaD likely plays a direct catalytic role in this reaction. The chain is tRNA N6-adenosine threonylcarbamoyltransferase from Yersinia pseudotuberculosis serotype I (strain IP32953).